We begin with the raw amino-acid sequence, 241 residues long: MEAAADGSAETQSPVEKDSPAKTQSPAQDTSTVSRNSADTGKVLALPEHTKKPKGYLPAESVKILRDWMYKHRFKAYPSEEEKQMLSEKTNLSLSQISNWFINARRRILPDMLKRHGNDPNIGHETGKDAHATHLQSTDASVPAKSGPSGPENVQSLPVWPLPKGQMSGEKLPDPESAPSQNPTVIAQPKKKVKVSVTSPSSPEPVPPEEYPDFSSFQLLVDAAVQRAAELELEKKQEPNP.

2 disordered regions span residues Met-1 to Tyr-56 and Arg-115 to Asp-213. Polar residues predominate over residues Ala-21 to Asp-39. The segment at residues Glu-48 to Asp-111 is a DNA-binding region (homeobox; TALE-type).

It belongs to the TALE/TGIF homeobox family.

It localises to the nucleus. In terms of biological role, may have a transcription role in testis. The chain is Homeobox protein TGIF2LX (TGIF2LX) from Hylobates lar (Lar gibbon).